Here is a 180-residue protein sequence, read N- to C-terminus: Transcriptional repressor NrdR (180 aa).

The segment at 3-34 (CPYCQNTSSRVLESRSTEAGQSIRRRRECLQC) is a zinc-finger region. The region spanning 49–139 (ISVLKKDKSK…VYGEFKGITD (91 aa)) is the ATP-cone domain. The tract at residues 148 to 180 (QQEERESSSSPEWSDAGEEATVIEDSSQVMASS) is disordered. Polar residues predominate over residues 171–180 (EDSSQVMASS).

Belongs to the NrdR family. The cofactor is Zn(2+).

In terms of biological role, negatively regulates transcription of bacterial ribonucleotide reductase nrd genes and operons by binding to NrdR-boxes. The chain is Transcriptional repressor NrdR from Gloeothece citriformis (strain PCC 7424) (Cyanothece sp. (strain PCC 7424)).